The chain runs to 595 residues: Putative terpenoid synthase 16 (595 aa).

4 residues coordinate Mg(2+): D349, D353, N494, and D502. The short motif at 349–353 (DDTCD) is the DDXXD motif element.

This sequence belongs to the terpene synthase family. Tpsa subfamily. Mg(2+) is required as a cofactor. It depends on Mn(2+) as a cofactor.

Its subcellular location is the cytoplasm. It participates in secondary metabolite biosynthesis; terpenoid biosynthesis. The sequence is that of Putative terpenoid synthase 16 (TPS16) from Arabidopsis thaliana (Mouse-ear cress).